Consider the following 215-residue polypeptide: L-fuculose phosphate aldolase (215 aa).

Residues 28-29 (GN), 43-44 (TG), and 71-72 (SS) each bind substrate. The Proton donor/acceptor role is filled by Glu-73. Glu-73, His-92, His-94, and His-155 together coordinate Zn(2+).

The protein belongs to the aldolase class II family. AraD/FucA subfamily. Homotetramer. Requires Zn(2+) as cofactor.

The enzyme catalyses L-fuculose 1-phosphate = (S)-lactaldehyde + dihydroxyacetone phosphate. It participates in carbohydrate degradation; L-fucose degradation; L-lactaldehyde and glycerone phosphate from L-fucose: step 3/3. Inhibited by phosphoglycolohydroxamate (PGH). Its function is as follows. Involved in the degradation of L-fucose and D-arabinose. Catalyzes the reversible cleavage of L-fuculose 1-phosphate (Fuc1P) to yield dihydroxyacetone phosphate (DHAP) and L-lactaldehyde. Also able to catalyze the reversible cleavage of D-ribulose 1-phosphate, but FucA has a higher affinity for L-fuculose 1-phosphate and L-lactaldehyde than for D-ribulose 1-phosphate and glycolaldehyde, respectively. FucA possesses a high specificity for the dihydroxyacetone phosphate (DHAP), but accepts a great variety of different aldehydes and has a strong preference for L-configurated alpha-hydroxy aldehydes. FucA generates a vicinal diol unit having the absolute (3R,4R)-cis configuration (D-erythro). The sequence is that of L-fuculose phosphate aldolase from Escherichia coli (strain K12).